The primary structure comprises 250 residues: Beta-crystallin B1 (250 aa).

A compositionally biased stretch (polar residues) spans 1–13 (MSQAAKASATTAV). The segment at 1-49 (MSQAAKASATTAVNPGPDGKGKGAPSTGPAPAPGPTPVPASVPRPAAKV) is disordered. Serine 2 carries the N-acetylserine modification. Positions 2–56 (SQAAKASATTAVNPGPDGKGKGAPSTGPAPAPGPTPVPASVPRPAAKVGDLPPGS) are N-terminal arm. Positions 28 to 42 (GPAPAPGPTPVPASV) are enriched in pro residues. 2 Beta/gamma crystallin 'Greek key' domains span residues 57–96 (YRLI…IVVS) and 97–141 (GPWV…RPIR). The tract at residues 142-146 (MDSQE) is connecting peptide. Beta/gamma crystallin 'Greek key' domains are found at residues 147–188 (HKIC…TVSG) and 189–231 (GTWV…RRLR). The interval 233-250 (RQWHQEGCFPVLTAEPPK) is C-terminal arm.

This sequence belongs to the beta/gamma-crystallin family. In terms of assembly, homo/heterodimer, or complexes of higher-order. The structure of beta-crystallin oligomers seems to be stabilized through interactions between the N-terminal arms. Post-translationally, specific cleavages in the N-terminal arm occur during lens maturation and give rise to truncated forms, leading to impaired oligomerization and protein insolubilization. The protease responsible for this partial degradation could be calpain II.

Crystallins are the dominant structural components of the vertebrate eye lens. The protein is Beta-crystallin B1 (Crybb1) of Mus musculus (Mouse).